A 185-amino-acid polypeptide reads, in one-letter code: Ribosome-recycling factor (185 aa).

The interval 137–159 is disordered; sequence EDLKADEKAKDISEDDRKRMEDE.

Belongs to the RRF family.

Its subcellular location is the cytoplasm. Its function is as follows. Responsible for the release of ribosomes from messenger RNA at the termination of protein biosynthesis. May increase the efficiency of translation by recycling ribosomes from one round of translation to another. In Erythrobacter litoralis (strain HTCC2594), this protein is Ribosome-recycling factor.